The sequence spans 803 residues: Isoamylase 1, chloroplastic (803 aa).

The transit peptide at methionine 1 to arginine 54 directs the protein to the chloroplast. Aspartate 432 serves as the catalytic Nucleophile. Catalysis depends on glutamate 488, which acts as the Proton donor.

It belongs to the glycosyl hydrolase 13 family. Forms a homo-pentamer and a hetero-hexamer composed of five ISA1 and one ISA2. Interacts with FLO6/SIP4. In terms of tissue distribution, highly expressed in developing endosperm. Expressed at low levels in leaves.

It localises to the plastid. It is found in the chloroplast. The enzyme catalyses Hydrolysis of (1-&gt;6)-alpha-D-glucosidic branch linkages in glycogen, amylopectin and their beta-limit dextrins.. It functions in the pathway glycan biosynthesis; starch biosynthesis. Its activity is regulated as follows. Inhibited by copper chloride, mercury chloride, ammonium molybdate and para-chloromercuribenzoate. Its function is as follows. Starch-debranching enzyme involved in amylopectin biosynthesis in endosperm. Functions by removing excess branches or improper branches that interfere with the formation of double helices of the cluster chains of amylopectin and crystallization of starch. Works as ISA1 homooligomer or together with ISA2 as heterooligomer. The heterooligomer ISA1 and ISA2 possesses higher affinity than the ISA1 homooligomer for various branched polyglucans in vitro, but no marked differences exist in chain preferences for debranching of amylopectin and phytoglycogen between these forms. The chain is Isoamylase 1, chloroplastic from Oryza sativa subsp. japonica (Rice).